Consider the following 366-residue polypeptide: Glutathione S-transferase omega-like 3 (366 aa).

The active site involves cysteine 46. One can recognise a GST C-terminal domain in the interval 197 to 349 (PRSLEAQITE…LGYTRSQPRV (153 aa)).

The protein belongs to the GST superfamily. Omega family.

Its subcellular location is the cytoplasm. It catalyses the reaction RX + glutathione = an S-substituted glutathione + a halide anion + H(+). In terms of biological role, active as '1-Cys' thiol transferase against beta-hydroxyethyl disulfide (HED), as dehydroascorbate reductase and as dimethylarsinic acid reductase, while not active against the standard GST substrate 1-chloro-2,4-dinitrobenzene (CDNB). In Saccharomyces cerevisiae (strain ATCC 204508 / S288c) (Baker's yeast), this protein is Glutathione S-transferase omega-like 3 (GTO3).